Here is a 287-residue protein sequence, read N- to C-terminus: ATP synthase gamma chain (287 aa).

The protein belongs to the ATPase gamma chain family. In terms of assembly, F-type ATPases have 2 components, CF(1) - the catalytic core - and CF(0) - the membrane proton channel. CF(1) has five subunits: alpha(3), beta(3), gamma(1), delta(1), epsilon(1). CF(0) has three main subunits: a, b and c.

Its subcellular location is the cell inner membrane. Produces ATP from ADP in the presence of a proton gradient across the membrane. The gamma chain is believed to be important in regulating ATPase activity and the flow of protons through the CF(0) complex. This Geotalea uraniireducens (strain Rf4) (Geobacter uraniireducens) protein is ATP synthase gamma chain.